The chain runs to 74 residues: uncharacterized protein (74 aa).

Residues 7–26 traverse the membrane as a helical segment; that stretch reads IHLYVMASAMSSSPIFFFFQ.

The protein localises to the membrane. This is an uncharacterized protein from Homo sapiens (Human).